The sequence spans 293 residues: Polyamine aminopropyltransferase (293 aa).

A PABS domain is found at 10–244 (HIWFTEYHNN…GFWSFTLASK (235 aa)). An S-methyl-5'-thioadenosine-binding site is contributed by glutamine 39. Residues histidine 70 and aspartate 94 each contribute to the spermidine site. S-methyl-5'-thioadenosine is bound by residues glutamate 114 and 145–146 (DG). Catalysis depends on aspartate 163, which acts as the Proton acceptor. 163 to 166 (DCPD) contributes to the spermidine binding site. Proline 170 lines the S-methyl-5'-thioadenosine pocket.

This sequence belongs to the spermidine/spermine synthase family. As to quaternary structure, homodimer or homotetramer.

The protein resides in the cytoplasm. It catalyses the reaction S-adenosyl 3-(methylsulfanyl)propylamine + putrescine = S-methyl-5'-thioadenosine + spermidine + H(+). It participates in amine and polyamine biosynthesis; spermidine biosynthesis; spermidine from putrescine: step 1/1. Its function is as follows. Catalyzes the irreversible transfer of a propylamine group from the amino donor S-adenosylmethioninamine (decarboxy-AdoMet) to putrescine (1,4-diaminobutane) to yield spermidine. In Methanocaldococcus jannaschii (strain ATCC 43067 / DSM 2661 / JAL-1 / JCM 10045 / NBRC 100440) (Methanococcus jannaschii), this protein is Polyamine aminopropyltransferase.